The following is a 264-amino-acid chain: MAVGKNKRLTKGGKKGAKKKVVDPFSKKDWYDVKAPAMFNIRNIGKTLVTRTQGTKIASDGLKGRVFEVSLADLQNDEVAFRKFKLITEDVQGKNCLTNFHGMDLTRDKMCSMVKKWQTMIEAHVDVKTTDGYLLRLFCVGFTKKRNNQIRKTSYAQHQQVRQIRKKMMEIMTREVQTNDLKEVVNKLIPDSIGKDIEKACQSIYPLHDVFVRKVKMLKKPKFELGKLMELHGEGGSSGKAAGDETGAKVERADGYEPPVQESV.

Lys-34 is subject to N6-acetyllysine; alternate. A Glycyl lysine isopeptide (Lys-Gly) (interchain with G-Cter in SUMO2); alternate cross-link involves residue Lys-34. At Lys-56 the chain carries N6-acetyllysine. Tyr-155 bears the ADP-ribosyltyrosine mark. Residues 233–264 form a disordered region; that stretch reads GEGGSSGKAAGDETGAKVERADGYEPPVQESV. Ser-237 bears the Phosphoserine mark. Basic and acidic residues predominate over residues 242-255; the sequence is AGDETGAKVERADG. Position 249 is an N6-acetyllysine; alternate (Lys-249). Lys-249 is covalently cross-linked (Glycyl lysine isopeptide (Lys-Gly) (interchain with G-Cter in SUMO2); alternate). Tyr-256 carries the post-translational modification Phosphotyrosine. Ser-263 is subject to Phosphoserine.

This sequence belongs to the eukaryotic ribosomal protein eS1 family. Component of the small ribosomal subunit. Mature ribosomes consist of a small (40S) and a large (60S) subunit. The 40S subunit contains about 33 different proteins and 1 molecule of RNA (18S). The 60S subunit contains about 49 different proteins and 3 molecules of RNA (28S, 5.8S and 5S). Identified in a IGF2BP1-dependent mRNP granule complex containing untranslated mRNAs. Binds with high affinity to IPO4. Interacts with DDIT3. Part of the small subunit (SSU) processome, composed of more than 70 proteins and the RNA chaperone small nucleolar RNA (snoRNA) U3. In terms of processing, ADP-ribosylated at Tyr-155 by PARP1 in presence of HPF1.

The protein resides in the cytoplasm. It is found in the nucleus. Its subcellular location is the nucleolus. Its function is as follows. Component of the small ribosomal subunit. The ribosome is a large ribonucleoprotein complex responsible for the synthesis of proteins in the cell. Part of the small subunit (SSU) processome, first precursor of the small eukaryotic ribosomal subunit. During the assembly of the SSU processome in the nucleolus, many ribosome biogenesis factors, an RNA chaperone and ribosomal proteins associate with the nascent pre-rRNA and work in concert to generate RNA folding, modifications, rearrangements and cleavage as well as targeted degradation of pre-ribosomal RNA by the RNA exosome. May play a role during erythropoiesis through regulation of transcription factor DDIT3. This Mus musculus (Mouse) protein is Small ribosomal subunit protein eS1 (Rps3a).